We begin with the raw amino-acid sequence, 20 residues long: AVVFDPQPALWAEADTQLEP.

The segment at 1–20 (AVVFDPQPALWAEADTQLEP) is disordered.

As to quaternary structure, interacts with CRISP3. In terms of processing, glycosylated. Plasma.

It localises to the secreted. This Equus asinus (Donkey) protein is Alpha-1B-glycoprotein (A1BG).